We begin with the raw amino-acid sequence, 128 residues long: Small ribosomal subunit protein uS12 (128 aa).

Position 89 is a 3-methylthioaspartic acid (D89).

The protein belongs to the universal ribosomal protein uS12 family. Part of the 30S ribosomal subunit. Contacts proteins S8 and S17. May interact with IF1 in the 30S initiation complex.

Functionally, with S4 and S5 plays an important role in translational accuracy. Interacts with and stabilizes bases of the 16S rRNA that are involved in tRNA selection in the A site and with the mRNA backbone. Located at the interface of the 30S and 50S subunits, it traverses the body of the 30S subunit contacting proteins on the other side and probably holding the rRNA structure together. The combined cluster of proteins S8, S12 and S17 appears to hold together the shoulder and platform of the 30S subunit. The protein is Small ribosomal subunit protein uS12 of Campylobacter jejuni subsp. jejuni serotype O:6 (strain 81116 / NCTC 11828).